A 725-amino-acid polypeptide reads, in one-letter code: G-quartet DNA-binding protein TGP1 (725 aa).

The Nuclear localization signal motif lies at 241–258; it reads KKALTDVLQIHEKKERVH. Disordered stretches follow at residues 252 to 284 and 468 to 614; these read EKKE…LQET and EIHK…GKRG. A compositionally biased stretch (basic residues) spans 256 to 277; the sequence is RVHKQQNKNKNPRNAHKNHNRQ. The segment covering 468–478 has biased composition (basic and acidic residues); it reads EIHKIDRERKR. The span at 517 to 544 shows a compositional bias: low complexity; it reads NKYKNTSVQNNNNNKNQQRSQSQNQRPP. Over residues 545-564 the composition is skewed to basic and acidic residues; it reads RNYDNRQGGENRNNRQRNEN. Residues 565-593 show a composition bias toward low complexity; that stretch reads NRNNFNGNGHRVNNQNNQRNRNSSYPRNN.

In terms of processing, the N-terminus is blocked.

The protein resides in the nucleus. Binds specifically to parallel G4-DNA, a four-stranded structure stabilized by tetrads of hydrogen-bonded guanines. This is G-quartet DNA-binding protein TGP1 (TGP1) from Tetrahymena thermophila.